The primary structure comprises 176 residues: Retinol-binding protein 4-A (176 aa).

Residue serine 1 is modified to N-acetylserine. Disulfide bonds link cysteine 3–cysteine 159, cysteine 69–cysteine 173, and cysteine 119–cysteine 128. Glutamine 97 is a substrate binding site.

It belongs to the calycin superfamily. Lipocalin family.

Its subcellular location is the secreted. RBP delivers retinol from the liver stores to the peripheral tissues. In plasma, the RBP-retinol complex interacts with transthyretin, this prevents its loss by filtration through the kidney glomeruli. The polypeptide is Retinol-binding protein 4-A (rbp4a) (Oncorhynchus mykiss (Rainbow trout)).